A 622-amino-acid chain; its full sequence is Neuronal acetylcholine receptor subunit alpha-4 (622 aa).

Residues 1 to 23 form the signal peptide; the sequence is MGFLVSKGNLLLLLCASIFPAFG. Residues 24 to 237 lie on the Extracellular side of the membrane; sequence HVETRAHAEE…ITYSFIIRRL (214 aa). The N-linked (GlcNAc...) asparagine glycan is linked to asparagine 52. 2 residues coordinate Ca(2+): valine 71 and glutamate 73. A glycan (N-linked (GlcNAc...) asparagine) is linked at asparagine 102. 2 disulfide bridges follow: cysteine 156–cysteine 170 and cysteine 220–cysteine 221. A helical membrane pass occupies residues 238–262; it reads PLFYTINLIIPCLLISCLTVLVFYL. Residue cysteine 266 is the site of S-palmitoyl cysteine attachment. Helical transmembrane passes span 270–288 and 304–325; these read ITLC…LLIT and YLLF…VLNV. Topologically, residues 326 to 595 are cytoplasmic; sequence HHRSPRTHTM…WKYVAMVIDR (270 aa). Disordered stretches follow at residues 380 to 477 and 497 to 516; these read WSET…TEEG and QTNG…LNEE. Residues 390–407 are compositionally biased toward low complexity; it reads TTSSSPSPQSNEPSPTSS. Polar residues-rich tracts occupy residues 450-472 and 497-508; these read SDTQ…YSPN and QTNGHSSASPAS. The chain crosses the membrane as a helical span at residues 596–614; the sequence is IFLWMFIIVCLLGTVGLFL.

The protein belongs to the ligand-gated ion channel (TC 1.A.9) family. Acetylcholine receptor (TC 1.A.9.1) subfamily. Alpha-4/CHRNA4 sub-subfamily. As to quaternary structure, neuronal AChR is composed of two different types of subunits: alpha and beta. CHRNA4 forms heteropentameric neuronal acetylcholine receptors with CHRNB2 and CHRNB4, as well as CHRNA5 and CHRNB3 as accesory subunits. Found in two major stoichiometric forms, LS (low agonist sensitivity): (CHRNA4)3:(CHRNB2)2 and HS (high agonist sensitivity): (CHRNA4)2:(CHRNB2)3, the two stoichiometric forms differ in their unitary conductance, calcium permeability, ACh sensitivity and potentiation by divalent cation. Cells produce predominantly an (CHRNA4)3:(CHRNB2)2 nAChR. The (CHRNA4)2:(CHRNB2)3 expression is selectively up-regulated by nicotine and has lower single channel conductance and calcium permeability. In the striatum, also forms CHRNA4:CHRNA6:CHRNB2 complexes. Also found in the stoichiometric form: (CHRNA4:CHRNB2)2:CHRNB3.

It is found in the synaptic cell membrane. Its subcellular location is the cell membrane. It carries out the reaction Ca(2+)(in) = Ca(2+)(out). The catalysed reaction is K(+)(in) = K(+)(out). It catalyses the reaction Na(+)(in) = Na(+)(out). Its activity is regulated as follows. Activated by a myriad of ligands such as acetylcholine, cytisine, nicotine, choline and epibatidine. Channel potentiation by calcium is stoichiometry-selective, CHRNA4:CHRNB2 nACh receptor is achieved by calcium association with topographically distinct sites framed by anionic residues within the CHRNA4 subunit and between the CHRNA4 and CHRNB2 subunits. nAChR activity is inhibited by the antagonist alpha-conotoxins BuIA, PnIA, GID and MII, small disulfide-constrained peptides from cone snails. Its function is as follows. Component of neuronal acetylcholine receptors (nAChRs) that function as pentameric, ligand-gated cation channels with high calcium permeability among other activities. nAChRs are excitatory neurotrasnmitter receptors formed by a collection of nAChR subunits known to mediate synaptic transmission in the nervous system and the neuromuscular junction. Each nAchR subunit confers differential attributes to channel properties, including activation, deactivation and desensitization kinetics, pH sensitivity, cation permeability, and binding to allosteric modulators. CHRNA4 forms heteropentameric neuronal acetylcholine receptors with CHRNB2 and CHRNB4, as well as CHRNA5 and CHRNB3 as accesory subunits. Is the most abundant nAChR subtype expressed in the central nervous system. Found in two major stoichiometric forms,(CHRNA4)3:(CHRNB2)2 and (CHRNA4)2:(CHRNB2)3, the two stoichiometric forms differ in their unitary conductance, calcium permeability, ACh sensitivity and potentiation by divalent cation. Involved in the modulation of calcium-dependent signaling pathways, influences the release of neurotransmitters, including dopamine, glutamate and GABA. This chain is Neuronal acetylcholine receptor subunit alpha-4 (CHRNA4), found in Gallus gallus (Chicken).